The primary structure comprises 1418 residues: Transcriptional regulator ADR1 (1418 aa).

Low complexity-rich tracts occupy residues 34–44 (TTTTANMSNTT) and 68–93 (TSMS…TTTS). The disordered stretch occupies residues 34-96 (TTTTANMSNT…AATTTTSKKS (63 aa)). 2 consecutive C2H2-type zinc fingers follow at residues 117 to 139 (FVCQ…ERSH) and 145 to 168 (FSCG…QKLH). 5 disordered regions span residues 181–285 (KSIK…LDQR), 403–426 (SQHG…RSES), 454–484 (VAAH…GLSR), 1132–1167 (NSNS…NNSN), and 1338–1362 (TNTN…NQHH). Residues 189-211 (GDDDDDDDDDDEEMANSEDENDH) are compositionally biased toward acidic residues. Positions 236-278 (NLFNSKQKPTKANTTKSKVAKLSTTTSRKNSTNPTRKNSSSLH) are enriched in polar residues. Composition is skewed to low complexity over residues 462–477 (QQQQ…QPNQ), 1145–1167 (NEIN…NNSN), and 1338–1356 (TNTN…DNGT).

It localises to the nucleus. Its function is as follows. Transcription factor involved in the regulation of hyphal growth. This chain is Transcriptional regulator ADR1 (ADR1), found in Candida albicans (strain SC5314 / ATCC MYA-2876) (Yeast).